The primary structure comprises 86 residues: Muscarinic toxin 7 (86 aa).

Positions 1–21 are cleaved as a signal peptide; sequence MKTLLLTLVVVTIVCLDLGYT. Finger loop stretches follow at residues 23-37, 44-63, and 66-78; these read TCVKSNSIWFPTSED, LCFKRWQYISPRMYDFTRGC, and TCPKAEYRDVINC. Intrachain disulfides connect Cys-24–Cys-45, Cys-38–Cys-63, Cys-67–Cys-78, and Cys-79–Cys-84.

The protein belongs to the three-finger toxin family. Short-chain subfamily. Aminergic toxin sub-subfamily. As to expression, expressed by the venom gland.

Its subcellular location is the secreted. Its function is as follows. Binds specifically and irreversibly to an allosteric site of the muscarinic acetylcholine M1 receptor (CHRM1) at subnanomolar concentrations and shows a very slow dissociation rate. It also inhibits agonist-mediated guanosine 5'-O-(3'-thiotriphosphate) (GTP-g-S) binding and downstream signaling, and decreases the dissociation rate of orthosteric antagonists (N-methylscopolamine (NMS) or pirenzepine). Is a potent negative allosteric modulator (NAM) for CHRM1 activation and a positive allosteric modulator (PAM) for antagonist binding. In Dendroaspis angusticeps (Eastern green mamba), this protein is Muscarinic toxin 7.